We begin with the raw amino-acid sequence, 135 residues long: Methylglyoxal synthase (135 aa).

Positions 1-135 constitute an MGS-like domain; sequence MPKRRRIALI…AQPDPKEIHA (135 aa). Residues His12, Lys16, 38–41, and 58–59 contribute to the substrate site; these read TGTT and SG. Residue Asp64 is the Proton donor/acceptor of the active site. His91 contributes to the substrate binding site.

The protein belongs to the methylglyoxal synthase family.

The catalysed reaction is dihydroxyacetone phosphate = methylglyoxal + phosphate. Functionally, catalyzes the formation of methylglyoxal from dihydroxyacetone phosphate. This Ralstonia nicotianae (strain ATCC BAA-1114 / GMI1000) (Ralstonia solanacearum) protein is Methylglyoxal synthase.